The chain runs to 2435 residues: ATP-binding cassette sub-family A member 2 (2435 aa).

The N-linked (GlcNAc...) asparagine glycan is linked to N14. 2 consecutive transmembrane segments (helical) span residues 22 to 42 and 54 to 74; these read PWVLAFEIFIPLVLFFILLGL and AFYTAAPLTSAGILPVMQSLC. Residues N89, N168, and N173 are each glycosylated (N-linked (GlcNAc...) asparagine). An N5-methylglutamine modification is found at Q271. N-linked (GlcNAc...) asparagine glycans are attached at residues N305, N368, N379, N420, N432, N476, N484, N494, N530, N544, N590, N600, and N628. 6 consecutive transmembrane segments (helical) span residues 699-719, 750-770, 782-802, 813-833, 857-877, and 893-913; these read FLFVIEHMMPLCMVISWVYSV, VAWFITGFVQLSISVTALTAI, VVIIWLFLAVYAVATIMFCFL, ASACGGIIYFLSYVPYMYVAI, AFGLGSKYFALYEVAGVGIQW, and LLAVTMLMVDAVVYGILTWYI. The ABC transporter 1 domain occupies 990 to 1221; that stretch reads VCVDKLTKVY…YGDGYRLTLV (232 aa). 1024–1031 is an ATP binding site; that stretch reads GHNGAGKT. Disordered regions lie at residues 1223–1243 and 1325–1357; these read RPAEPGGPQEPGLASSPPGRA and DQSLENSEADVKESRKDVLPGAEGPASGEGHAG. Residues S1238, S1327, and S1331 each carry the phosphoserine modification. Basic and acidic residues predominate over residues 1333-1342; that stretch reads ADVKESRKDV. N-linked (GlcNAc...) asparagine glycosylation is present at N1408. A helical membrane pass occupies residues 1456–1476; sequence ALFSQILLPAFFVCVAMTVAL. Residues N1496, N1549, and N1557 are each glycosylated (N-linked (GlcNAc...) asparagine). Residues 1586 to 1610 form a disordered region; sequence SNFVPPPPSPAPSDSPASPDEDLQA. A compositionally biased stretch (pro residues) spans 1589-1598; sequence VPPPPSPAPS. N-linked (GlcNAc...) asparagine glycosylation is found at N1612, N1677, and N1775. The next 5 helical transmembrane spans lie at 1792–1812, 1841–1861, 1872–1892, 1905–1925, and 1991–2011; these read VVIAIFIIVAMSFVPASFVVF, VWDMLNYLVPATCCVIILFVF, FPAVLSLFLLYGWSITPIMYP, VFLIVINLFIGITATVATFLL, and GLVAMAVEGVVGFLLTIMCQY. The 236-residue stretch at 2050–2285 folds into the ABC transporter 2 domain; sequence VKIENLTKVY…FGDGYMITVR (236 aa). N2054 is a glycosylation site (N-linked (GlcNAc...) asparagine). 2087–2094 is an ATP binding site; the sequence is GVNGAGKT. T2412 bears the Phosphothreonine mark.

It belongs to the ABC transporter superfamily. ABCA family. Methylated at Gln-271 by N6AMT1. Highly expressed in the brain,peripheral blood leukocytes and ovary, whereas lower levels of expression is observed in kidney and liver. In terms of tissue distribution, weakly expressed in brain and highly in peripheral blood leukocytes.

The protein resides in the endosome membrane. It is found in the lysosome membrane. In terms of biological role, probable lipid transporter that modulates cholesterol sequestration in the late endosome/lysosome by regulating the intracellular sphingolipid metabolism, in turn participates in cholesterol homeostasis. May alter the transbilayer distribution of ceramide in the intraluminal membrane lipid bilayer, favoring its retention in the outer leaflet that results in increased acid ceramidase activity in the late endosome/lysosome, facilitating ceramide deacylation to sphingosine leading to the sequestration of free cholesterol in lysosomes. In addition regulates amyloid-beta production either by activating a signaling pathway that regulates amyloid precursor protein transcription through the modulation of sphingolipid metabolism or through its role in gamma-secretase processing of APP. May play a role in myelin formation. This is ATP-binding cassette sub-family A member 2 from Homo sapiens (Human).